The sequence spans 770 residues: Signal transducer and activator of transcription 3 (770 aa).

The residue at position 2 (Ala-2) is an N-acetylalanine. An N6-acetyllysine mark is found at Lys-49 and Lys-87. The Essential for nuclear import motif lies at 150–162 (DVRKRVQDLEQKM). The region spanning 580–670 (WNEGYIMGFI…DATNILVSPL (91 aa)) is the SH2 domain. Allysine; alternate is present on residues Lys-601, Lys-615, and Lys-631. Residues Lys-601, Lys-615, and Lys-631 each carry the N6-acetyllysine; alternate modification. Tyr-640 carries the post-translational modification Phosphotyrosine; by TYK2. The residue at position 685 (Lys-685) is an Allysine; alternate. An N6-acetyllysine; alternate modification is found at Lys-685. Tyr-705 carries the post-translational modification Phosphotyrosine; by FER and PTK6. Residue Lys-707 is modified to N6-acetyllysine. Thr-714 is modified (phosphothreonine). Ser-727 carries the post-translational modification Phosphoserine; by DYRK2, NLK, NEK6, IRAK1, RPS6KA5, ZIPK/DAPK3 and PKC/PRKCE.

Belongs to the transcription factor STAT family. As to quaternary structure, forms a homodimer or a heterodimer with a related family member (at least STAT1). Component of a promoter-binding complex composed of STAT3, NFATC3 and NFATC4; complex formation is enhanced by calcineurin. Interacts with IL31RA, NCOA1, PELP1, SIPAR, SOCS7, STATIP1 and TMF1. Interacts with IL23R in presence of IL23. Interacts (via SH2 domain) with NLK. Interacts with ARL2BP; the interaction is enhanced by LIF and JAK1 expression. Interacts with KPNA4 and KPNA5; KPNA4 may be the primary mediator of nuclear import. Interacts with CAV2; the interaction is increased on insulin-induced tyrosine phosphorylation of CAV2 and leads to STAT3 activation. Interacts with ARL2BP; interaction is enhanced with ARL2. Interacts with NEK6. Binds to CDK9 when activated and nuclear. Interacts with BMX. Interacts with ZIPK/DAPK3. Interacts with PIAS3; the interaction occurs on stimulation by IL6, CNTF or OSM and inhibits the DNA binding activity of STAT3. In prostate cancer cells, interacts with PRKCE and promotes DNA binding activity of STAT3. Interacts with STMN3, antagonizing its microtubule-destabilizing activity. Interacts with the 'Lys-129' acetylated form of BIRC5/survivin. Interacts with FER. Interacts (via SH2 domain) with EIF2AK2/PKR (via the kinase catalytic domain). Interacts with FGFR4. Interacts with INPP5F; the interaction is independent of STAT3 Tyr-705 phosphorylation status. Interacts with OCIAD1. Interacts with OCIAD2. Interacts (unphosphorylated or phosphorylated at Ser-727) with PHB1. Interacts and may form heterodimers with NHLH1. Found in a complex with SLC39A6, SLC39A10 and with the 'Ser-727' phosphorylated form of STAT3 throughout mitosis. Interacts (when acetylated) with EP300 (via bromo domain); interaction takes place following STAT3 acetylation by EP300 and promotes enhanceosome assembly. Interacts (when acetylated) with BRD2 (via bromo domain); interaction promotes STAT3 recruitment to chromatin and T-helper Th17 cell differentiation. Interacts with FAM220A/SIPAR; the interaction occurs in both the nucleus and the cytoplasm, is enhanced by IL6 and promotes STAT3 dephosphorylation. Interacts in both unphosphorylated and phosphorylated forms with FAM220A but interacts preferentially in the phosphorylated form in the nucleus. Interacts with PTPN2; the interaction is promoted by FAM220A and leads to STAT3 dephosphorylation which negatively regulates STAT3 transcriptional activator activity. Activated through tyrosine phosphorylation by BMX. Tyrosine phosphorylated in response to IL6, IL11, CNTF, LIF, KITLG/SCF, CSF1, EGF, PDGF, IFN-alpha, LEP and OSM. Activated KIT promotes phosphorylation on tyrosine residues and subsequent translocation to the nucleus. Tyrosine phosphorylated in response to constitutively activated FGFR1, FGFR2, FGFR3 and FGFR4. Phosphorylated on serine upon DNA damage, probably by ATM or ATR. Serine phosphorylation is important for the formation of stable DNA-binding STAT3 homodimers and maximal transcriptional activity. ARL2BP may participate in keeping the phosphorylated state of STAT3 within the nucleus. Tyrosine phosphorylated upon stimulation with EGF. Upon LPS challenge, phosphorylated within the nucleus by IRAK1. Upon UV-A treatment, phosphorylated on Ser-727 by RPS6KA5. Dephosphorylation on tyrosine residues by PTPN2 negatively regulates IL6/interleukin-6 signaling. Phosphorylation at Tyr-705 by PTK6, isoform M2 of PKM (PKM2) or FER leads to an increase of its transcriptional activity. Phosphorylation at Tyr-705 is increased in the presence of calcineurin. Phosphorylation at Tyr-640 by TYK2 negatively regulates transcriptional activity. Post-translationally, acetylated on lysine residues by EP300/p300, promoting its activation. Acetylation at Lys-49 and Lys-87 by EP300/p300 promotes its activation. Acetylation at Lys-87 by EP300/p300 promotes its association with BRD2 and recruitment to chromatin. Deacetylated at Lys-49 and Lys-87 by HDAC1. Acetylation at Lys-685 by EP300/p300 promotes its homodimerization and activation. Deacetylated at Lys-685 by HDAC3. Acetylated on lysine residues by CREBBP. Deacetylation by LOXL3 leads to disrupt STAT3 dimerization and inhibit STAT3 transcription activity. Oxidation of lysine residues to allysine on STAT3 preferentially takes place on lysine residues that are acetylated. In terms of processing, some lysine residues are oxidized to allysine by LOXL3, leading to disrupt STAT3 dimerization and inhibit STAT3 transcription activity. Oxidation of lysine residues to allysine on STAT3 preferentially takes place on lysine residues that are acetylated. (Microbial infection) Phosphorylated on Tyr-705 in the presence of S.typhimurium SarA. Expressed in ventricular cardiomyocytes (at protein level). Expressed in the lung (at protein level). Expressed in the liver, spleen and kidney. As to expression, expressed in the liver.

It is found in the cytoplasm. It localises to the nucleus. In terms of biological role, signal transducer and transcription activator that mediates cellular responses to interleukins, KITLG/SCF, LEP and other growth factors. Once activated, recruits coactivators, such as NCOA1 or MED1, to the promoter region of the target gene. May mediate cellular responses to activated FGFR1, FGFR2, FGFR3 and FGFR4. Upon activation of IL6ST/gp130 signaling by interleukin-6 (IL6), binds to the IL6-responsive elements identified in the promoters of various acute-phase protein genes. Activated by IL31 through IL31RA. Acts as a regulator of inflammatory response by regulating differentiation of naive CD4(+) T-cells into T-helper Th17 or regulatory T-cells (Treg): acetylation promotes its transcription activity and cell differentiation while deacetylation and oxidation of lysine residues by LOXL3 inhibits differentiation. Involved in cell cycle regulation by inducing the expression of key genes for the progression from G1 to S phase, such as CCND1. Mediates the effects of LEP on melanocortin production, body energy homeostasis and lactation. May play an apoptotic role by transctivating BIRC5 expression under LEP activation. Cytoplasmic STAT3 represses macroautophagy by inhibiting EIF2AK2/PKR activity. Plays a crucial role in basal beta cell functions, such as regulation of insulin secretion. Following JAK/STAT signaling activation and as part of a complex with NFATC3 and NFATC4, binds to the alpha-beta E4 promoter region of CRYAB and activates transcription in cardiomyocytes. Plays an important role in host defense in methicillin-resistant S.aureus lung infection by regulating the expression of the antimicrobial lectin REG3G. The polypeptide is Signal transducer and activator of transcription 3 (Mus musculus (Mouse)).